Reading from the N-terminus, the 111-residue chain is Putative splicing factor C222.18 (111 aa).

Residues 18-95 (HTLYIRNFGT…DIIFVEWAKS (78 aa)) form the RRM domain.

It belongs to the splicing factor SR family.

The protein resides in the nucleus. Has a role in pre-mRNA splicing where it is involved in spliceosome assembly. In Schizosaccharomyces pombe (strain 972 / ATCC 24843) (Fission yeast), this protein is Putative splicing factor C222.18.